The chain runs to 189 residues: Glutathione-dependent formaldehyde-activating enzyme (189 aa).

In terms of domain architecture, CENP-V/GFA spans 20–166; the sequence is FAGGTLVCAC…LRTIGLEPYD (147 aa). Positions 27, 29, 48, 50, 53, 95, and 98 each coordinate Zn(2+).

Belongs to the Gfa family. Zn(2+) is required as a cofactor.

It catalyses the reaction S-(hydroxymethyl)glutathione = glutathione + formaldehyde. Its pathway is one-carbon metabolism; formaldehyde degradation; formate from formaldehyde (glutathione route): step 1/3. In terms of biological role, catalyzes the condensation of formaldehyde and glutathione to S-hydroxymethylglutathione. This chain is Glutathione-dependent formaldehyde-activating enzyme, found in Mesorhizobium japonicum (strain LMG 29417 / CECT 9101 / MAFF 303099) (Mesorhizobium loti (strain MAFF 303099)).